The primary structure comprises 624 residues: DNA (cytosine-5)-methyltransferase DRM1 (624 aa).

2 UBA domains span residues 57–100 and 108–149; these read RISD…LFNY and SSKS…LLTY. The disordered stretch occupies residues 160 to 189; that stretch reads DMNININDDDDDNLYSLSSDDEEDELNNSS. The span at 166-185 shows a compositional bias: acidic residues; sequence NDDDDDNLYSLSSDDEEDEL. The region spanning 188–231 is the UBA 3 domain; it reads SSNEDRILQALIKMGYLREDAAIAIERCGEDASMEEVVDFICAA. In terms of domain architecture, SAM-dependent MTase DRM-type spans 291–622; it reads MHRPVPIPDI…EAVRRKARHM (332 aa).

This sequence belongs to the class I-like SAM-binding methyltransferase superfamily. DRM-methyltransferase family.

It is found in the nucleus. It catalyses the reaction a 2'-deoxycytidine in DNA + S-adenosyl-L-methionine = a 5-methyl-2'-deoxycytidine in DNA + S-adenosyl-L-homocysteine + H(+). In terms of biological role, involved in de novo DNA methylation. Controls asymmetric and CpNpG methylation. Required for FWA gene silencing but not for the maintenance of SUP gene silencing. Functionally redundant to CMT3 to maintain non-CpG methylation. Involved in RNA-directed DNA methylation. This is DNA (cytosine-5)-methyltransferase DRM1 (DRM1) from Arabidopsis thaliana (Mouse-ear cress).